A 216-amino-acid chain; its full sequence is GTP cyclohydrolase 1 (216 aa).

Zn(2+) is bound by residues C108, H111, and C179.

It belongs to the GTP cyclohydrolase I family. In terms of assembly, homomer.

It catalyses the reaction GTP + H2O = 7,8-dihydroneopterin 3'-triphosphate + formate + H(+). It functions in the pathway cofactor biosynthesis; 7,8-dihydroneopterin triphosphate biosynthesis; 7,8-dihydroneopterin triphosphate from GTP: step 1/1. In Shewanella baltica (strain OS223), this protein is GTP cyclohydrolase 1.